Consider the following 51-residue polypeptide: uncharacterized protein (51 aa).

The tract at residues methionine 1 to threonine 51 is disordered. The segment covering asparagine 19–leucine 36 has biased composition (low complexity).

This is an uncharacterized protein from Bdellovibrio bacteriovorus (Bacteriophage phiMH2K).